The following is a 307-amino-acid chain: 4-diphosphocytidyl-2-C-methyl-D-erythritol kinase (307 aa).

Residue K14 is part of the active site. 107-117 (PVAGGMAGGSA) is a binding site for ATP. The active site involves D149.

The protein belongs to the GHMP kinase family. IspE subfamily.

It carries out the reaction 4-CDP-2-C-methyl-D-erythritol + ATP = 4-CDP-2-C-methyl-D-erythritol 2-phosphate + ADP + H(+). It participates in isoprenoid biosynthesis; isopentenyl diphosphate biosynthesis via DXP pathway; isopentenyl diphosphate from 1-deoxy-D-xylulose 5-phosphate: step 3/6. In terms of biological role, catalyzes the phosphorylation of the position 2 hydroxy group of 4-diphosphocytidyl-2C-methyl-D-erythritol. The chain is 4-diphosphocytidyl-2-C-methyl-D-erythritol kinase from Thermobifida fusca (strain YX).